Consider the following 572-residue polypeptide: Terminal nucleotidyltransferase 4B (572 aa).

The segment at 1 to 105 (MYRSGERLLG…ADGGGVVYSG (105 aa)) is disordered. The segment covering 25 to 34 (ETTNNNNNHH) has biased composition (polar residues). Over residues 36–76 (PGAWARRAGSSASSPPSASSSPHPSAAVPAADPADSASGSS) the composition is skewed to low complexity. The span at 89-102 (RAAGGGRADGGGVV) shows a compositional bias: gly residues. Val-151 participates in a covalent cross-link: Glycyl lysine isopeptide (Lys-Gly) (interchain with G-Cter in SUMO2). 2 residues coordinate Mg(2+): Asp-177 and Asp-179. Gly-240, Lys-265, Ser-283, Tyr-284, Asn-368, and Arg-372 together coordinate ATP. A PAP-associated domain is found at 308–368 (NYGVLLIEFF…YIEDPLQPGN (61 aa)). Residues 435-572 (KNRPEPSCNG…RDAPLSDLCR (138 aa)) are disordered. The segment covering 446–464 (VSSSSATQSSSSDVDSDAT) has biased composition (low complexity). Lys-470 is covalently cross-linked (Glycyl lysine isopeptide (Lys-Gly) (interchain with G-Cter in SUMO2)). Over residues 477–494 (STGNRVGSQDVSLESSQA) the composition is skewed to polar residues. Residue Ser-484 is modified to Phosphoserine. Residues Lys-497, Lys-512, and Lys-526 each participate in a glycyl lysine isopeptide (Lys-Gly) (interchain with G-Cter in SUMO2) cross-link. Residues 499–514 (QSTQTTNTSNSTNKSQ) show a composition bias toward low complexity. Residues 522 to 553 (RSSSKGFQGTTQTSHGSLMTNKQHQGKSNNQY) show a composition bias toward polar residues. A Basic, involved in binding of the RNA primer motif is present at residues 557-563 (KKRKHKR).

The protein belongs to the DNA polymerase type-B-like family. In terms of assembly, component of a nucleolar TRAMP-like complex, an ATP-dependent exosome regulatory complex consisting of a helicase (MTREX), an oligadenylate polymerase (TENT4B or TENT4A), and a substrate specific RNA-binding factor (ZCCHC7 or ZCCHC8). Several TRAMP-like complexes exist with specific compositions and are associated with nuclear, or nucleolar RNA exosomes. Interacts with CPEB1; the interaction is required for TENT4B-mediated translational control. Requires Mg(2+) as cofactor. Mn(2+) is required as a cofactor.

It localises to the nucleus. The protein resides in the nucleolus. Its subcellular location is the cytoplasm. It catalyses the reaction RNA(n) + ATP = RNA(n)-3'-adenine ribonucleotide + diphosphate. In terms of biological role, terminal nucleotidyltransferase that catalyzes preferentially the transfer of ATP and GTP on RNA 3' poly(A) tail creating a heterogeneous 3' poly(A) tail leading to mRNAs stabilization by protecting mRNAs from active deadenylation. Also functions as a catalytic subunit of a TRAMP-like complex which has a poly(A) RNA polymerase activity and is involved in a post-transcriptional quality control mechanism. Polyadenylation with short oligo(A) tails is required for the degradative activity of the exosome on several of its nuclear RNA substrates. Doesn't need a cofactor for polyadenylation activity (in vitro). Required for cytoplasmic polyadenylation of mRNAs involved in carbohydrate metabolism, including the glucose transporter SLC2A1/GLUT1. Plays a role in replication-dependent histone mRNA degradation, probably through terminal uridylation of mature histone mRNAs. May play a role in sister chromatid cohesion. Mediates 3' adenylation of the microRNA MIR21 followed by its 3'-to-5' trimming by the exoribonuclease PARN leading to degradation. Mediates 3' adenylation of H/ACA box snoRNAs (small nucleolar RNAs) followed by its 3'-to-5' trimming by the exoribonuclease PARN which enhances snoRNA stability and maturation. The sequence is that of Terminal nucleotidyltransferase 4B from Homo sapiens (Human).